Here is a 522-residue protein sequence, read N- to C-terminus: MATVREKAVALDLCATYSPSQRPPGPNGSHRPFRATYIWSSIIQVLYTQVEVKKRRHHLKYHHDCFIGSEAVDVVFAHLVQHKYFGDMDIPRSKVVRVCQALMDCKVFEPIVTACMFGREKKRTVFEDSSCSLYRFLNSSNLLGVQVEKSNGRCTPQRPKHSSFQSASLQSPSLEDLWDNLSLTPADPTHINLTSNLPPKVVAEVWQEQTIRRLLQLVDLPLLDSLLEYTPVAPRIPNVKEEDHNLTSNYLDREILKAFSDAQADEWVSAAVDCLDFLPDHMVVDVSRNLPEQQAPDSKWKLLLFDTIGKHYSQNRAPLLRNQLFDIHTGIAELLVNGKTEPALEATQLCLKLLDSPSREEFRRLLYFMALAADPSEFRLNEETDNRMTVKRMFCRAIVNNKSLSKGKCDLLVLFILDHHKDVFKIPGSLHKMVSDKLVAIQQGTDPDRDTGYTFCQRVDKREFDSAAQNNTRTELCALLKTIYENNSLSPKEKKRLLGQFYKSHPETFIQYFGDRVSSVYT.

Positions 46 to 138 constitute a DEP domain; sequence LYTQVEVKKR…SSCSLYRFLN (93 aa).

Belongs to the DEPDC7 family.

The sequence is that of DEP domain-containing protein 7 (depdc7) from Xenopus laevis (African clawed frog).